Here is a 254-residue protein sequence, read N- to C-terminus: 3-deoxy-manno-octulosonate cytidylyltransferase (254 aa).

The protein belongs to the KdsB family.

It is found in the cytoplasm. The catalysed reaction is 3-deoxy-alpha-D-manno-oct-2-ulosonate + CTP = CMP-3-deoxy-beta-D-manno-octulosonate + diphosphate. It participates in nucleotide-sugar biosynthesis; CMP-3-deoxy-D-manno-octulosonate biosynthesis; CMP-3-deoxy-D-manno-octulosonate from 3-deoxy-D-manno-octulosonate and CTP: step 1/1. It functions in the pathway bacterial outer membrane biogenesis; lipopolysaccharide biosynthesis. Functionally, activates KDO (a required 8-carbon sugar) for incorporation into bacterial lipopolysaccharide in Gram-negative bacteria. This is 3-deoxy-manno-octulosonate cytidylyltransferase from Pseudomonas paraeruginosa (strain DSM 24068 / PA7) (Pseudomonas aeruginosa (strain PA7)).